A 230-amino-acid chain; its full sequence is Small ribosomal subunit protein uS2 (230 aa).

This sequence belongs to the universal ribosomal protein uS2 family.

The protein is Small ribosomal subunit protein uS2 of Prochlorococcus marinus (strain NATL2A).